The primary structure comprises 1164 residues: IgA FC receptor (1164 aa).

A signal peptide spans 1–37 (MFKSNYERKMRYSIRKFSVGVASVAVASLFMGSVAHA). 2 disordered regions span residues 54–75 (KPYP…ELET) and 167–220 (HEEV…EDKD). The span at 59-73 (MAQTDQGNNSSSSEL) shows a compositional bias: polar residues. Composition is skewed to basic and acidic residues over residues 167–176 (HEEVEKDKKA) and 183–220 (KQSD…EDKD). IgA-binding regions lie at residues 199–438 (NHQK…KIEL) and 439–826 (TVSP…ETNT). The Ig-like domain maps to 434-534 (QKIELTVSPE…VEKTFTITVQ (101 aa)). The span at 536-564 (KEEKQVPKTPEQKDSKTEEKVPQEPKSND) shows a compositional bias: basic and acidic residues. Disordered regions lie at residues 536 to 567 (KEEK…DKNQ) and 823 to 947 (ETNT…PDGL). The segment covering 911–920 (PKIPEPPKTP) has biased composition (pro residues). The LPXTG sorting signal signature appears at 1132–1136 (LPYTG). Thr-1135 carries the pentaglycyl murein peptidoglycan amidated threonine modification. A propeptide spans 1136-1164 (GVASNLVLEIMGLLGLIGTSFIAMKRRKS) (removed by sortase).

It localises to the secreted. The protein resides in the cell wall. The protein is IgA FC receptor (bag) of Streptococcus agalactiae.